The chain runs to 255 residues: Hydroxyacylglutathione hydrolase (255 aa).

Positions 55, 57, 59, 60, 113, 132, and 170 each coordinate Zn(2+).

This sequence belongs to the metallo-beta-lactamase superfamily. Glyoxalase II family. In terms of assembly, monomer. Zn(2+) serves as cofactor.

It catalyses the reaction an S-(2-hydroxyacyl)glutathione + H2O = a 2-hydroxy carboxylate + glutathione + H(+). It participates in secondary metabolite metabolism; methylglyoxal degradation; (R)-lactate from methylglyoxal: step 2/2. Functionally, thiolesterase that catalyzes the hydrolysis of S-D-lactoyl-glutathione to form glutathione and D-lactic acid. The chain is Hydroxyacylglutathione hydrolase from Methylobacterium sp. (strain 4-46).